We begin with the raw amino-acid sequence, 97 residues long: ESAT-6-like protein EsxG (97 aa).

N-acetylserine is present on Ser2.

Belongs to the WXG100 family. CFP-10 subfamily. Forms a tight 1:1 complex with EsxH.

Its subcellular location is the secreted. Its function is as follows. EsxG, in complex with EsxH, disrupts ESCRT function and impairs host phagosome maturation, thereby promoting intracellular bacterial growth. The complex acts by interacting, via EsxH, with the host hepatocyte growth factor-regulated tyrosine kinase substrate (HGS/HRS), a component of the ESCRT machinery. EsxG stabilizes EsxH in the host cytosol. This chain is ESAT-6-like protein EsxG, found in Mycobacterium tuberculosis (strain ATCC 25618 / H37Rv).